A 141-amino-acid polypeptide reads, in one-letter code: Organic hydroperoxide resistance protein-like 1 (141 aa).

The disordered stretch occupies residues 1-20 (MAVNYETKATNTGGRNGHVQ).

It belongs to the OsmC/Ohr family.

This Staphylococcus saprophyticus subsp. saprophyticus (strain ATCC 15305 / DSM 20229 / NCIMB 8711 / NCTC 7292 / S-41) protein is Organic hydroperoxide resistance protein-like 1.